Here is a 326-residue protein sequence, read N- to C-terminus: tRNA-modifying protein YgfZ (326 aa).

Folate is bound by residues Trp27 and Trp189.

It belongs to the tRNA-modifying YgfZ family.

The protein localises to the cytoplasm. Its function is as follows. Folate-binding protein involved in regulating the level of ATP-DnaA and in the modification of some tRNAs. It is probably a key factor in regulatory networks that act via tRNA modification, such as initiation of chromosomal replication. The sequence is that of tRNA-modifying protein YgfZ from Escherichia coli O7:K1 (strain IAI39 / ExPEC).